A 366-amino-acid chain; its full sequence is tRNA/tmRNA (uracil-C(5))-methyltransferase (366 aa).

Residues glutamine 189, tyrosine 217, asparagine 222, glutamate 238, and aspartate 298 each contribute to the S-adenosyl-L-methionine site. The Nucleophile role is filled by cysteine 323. Glutamate 357 (proton acceptor) is an active-site residue.

Belongs to the class I-like SAM-binding methyltransferase superfamily. RNA M5U methyltransferase family. TrmA subfamily.

The catalysed reaction is uridine(54) in tRNA + S-adenosyl-L-methionine = 5-methyluridine(54) in tRNA + S-adenosyl-L-homocysteine + H(+). The enzyme catalyses uridine(341) in tmRNA + S-adenosyl-L-methionine = 5-methyluridine(341) in tmRNA + S-adenosyl-L-homocysteine + H(+). Its function is as follows. Dual-specificity methyltransferase that catalyzes the formation of 5-methyluridine at position 54 (m5U54) in all tRNAs, and that of position 341 (m5U341) in tmRNA (transfer-mRNA). This is tRNA/tmRNA (uracil-C(5))-methyltransferase from Shewanella putrefaciens (strain CN-32 / ATCC BAA-453).